We begin with the raw amino-acid sequence, 1488 residues long: Chromosome partition protein MukB (1488 aa).

34–41 (GGNGAGKS) provides a ligand contact to ATP. 3 coiled-coil regions span residues 326-418 (LEAD…QYNQ), 444-472 (LDTF…QTAH), and 509-602 (RHLA…QRAP). Positions 666–783 (PGGAEDQRLN…SLPIFGRAAR (118 aa)) are flexible hinge. 3 coiled-coil regions span residues 835–923 (EAEI…AKLE), 977–1116 (EMLS…AKAG), and 1209–1265 (VEAI…LQSV). Residues 1049 to 1074 (ADSGAEERARQRRDELHAQLSNNRSR) are disordered. The span at 1051–1065 (SGAEERARQRRDELH) shows a compositional bias: basic and acidic residues.

It belongs to the SMC family. MukB subfamily. As to quaternary structure, homodimerization via its hinge domain. Binds to DNA via its C-terminal region. Interacts, and probably forms a ternary complex, with MukE and MukF via its C-terminal region. The complex formation is stimulated by calcium or magnesium. Interacts with tubulin-related protein FtsZ.

The protein localises to the cytoplasm. Its subcellular location is the nucleoid. Its function is as follows. Plays a central role in chromosome condensation, segregation and cell cycle progression. Functions as a homodimer, which is essential for chromosome partition. Involved in negative DNA supercoiling in vivo, and by this means organize and compact chromosomes. May achieve or facilitate chromosome segregation by condensation DNA from both sides of a centrally located replisome during cell division. The protein is Chromosome partition protein MukB of Salmonella arizonae (strain ATCC BAA-731 / CDC346-86 / RSK2980).